The sequence spans 161 residues: MAEINSLSELSMATSITEPHENVVPVHVQKLDSQGRAYATGKRKDAVARVWIKPGSGKIIINNKEFDKYFARPVLRMILRQPIVATNRDTQFDIVATVAGGGLSGQAGAIRHGISKALTYYEPELRPILKKGGFLTRDSRVVERKKYGKAKARRSFQFSKR.

It belongs to the universal ribosomal protein uS9 family.

This Bartonella tribocorum (strain CIP 105476 / IBS 506) protein is Small ribosomal subunit protein uS9.